A 447-amino-acid polypeptide reads, in one-letter code: Hemopexin (447 aa).

The signal sequence occupies residues 1-18 (MRLIQALSLCLALSLSLA). Residues 20–44 (PPQHKEDHSHKGKPGGEGHKHELHH) form a disordered region. Basic and acidic residues predominate over residues 22–44 (QHKEDHSHKGKPGGEGHKHELHH). 8 Hemopexin repeats span residues 53–93 (GIEF…FPEL), 99–151 (LGHV…FPGI), 152–197 (PDHL…FKSM), 198–243 (PNCT…FMRC), 262–304 (RVHL…FKEL), 305–351 (HSEV…VLGI), 352–395 (EGPV…TITQ), and 396–441 (FKRI…VSQQ). The N-linked (GlcNAc...) asparagine glycan is linked to N87. 2 N-linked (GlcNAc...) asparagine glycosylation sites follow: N168 and N199. H293 contacts heme.

Belongs to the hemopexin family.

Its subcellular location is the secreted. Binds heme and transports it to the liver for breakdown and iron recovery, after which the free hemopexin returns to the circulation. This is Hemopexin from Danio rerio (Zebrafish).